The chain runs to 685 residues: Methionine--tRNA ligase (685 aa).

The 'HIGH' region motif lies at 12-22; sequence PYANGSIHLGH. Zn(2+) contacts are provided by Cys-143, Cys-146, Cys-156, and Cys-159. The 'KMSKS' region motif lies at 339 to 343; that stretch reads KMSKS. Lys-342 is a binding site for ATP. A tRNA-binding domain is found at 582–685; the sequence is DFMKIDMRVA…TGAQPGDKVG (104 aa).

The protein belongs to the class-I aminoacyl-tRNA synthetase family. MetG type 1 subfamily. In terms of assembly, homodimer. Requires Zn(2+) as cofactor.

It localises to the cytoplasm. It catalyses the reaction tRNA(Met) + L-methionine + ATP = L-methionyl-tRNA(Met) + AMP + diphosphate. Functionally, is required not only for elongation of protein synthesis but also for the initiation of all mRNA translation through initiator tRNA(fMet) aminoacylation. This chain is Methionine--tRNA ligase, found in Neisseria meningitidis serogroup B (strain ATCC BAA-335 / MC58).